The primary structure comprises 99 residues: UPF0213 protein YazA (99 aa).

Residues 4–79 (NNHFFYVVKC…KKLTRKKKEL (76 aa)) enclose the GIY-YIG domain.

It belongs to the UPF0213 family.

This chain is UPF0213 protein YazA (yazA), found in Bacillus subtilis (strain 168).